Consider the following 327-residue polypeptide: Sideroflexin FSF1 (327 aa).

A2 carries the N-acetylalanine modification. 4 helical membrane passes run 98–118, 143–163, 179–199, and 272–292; these read NLVV…TVFW, SQLL…ALGL, LILG…VNVF, and ANLG…LGIF.

Belongs to the sideroflexin family.

It is found in the mitochondrion membrane. Mitochondrial amino-acid transporter that mediates transport of serine into mitochondria. This chain is Sideroflexin FSF1, found in Saccharomyces cerevisiae (strain ATCC 204508 / S288c) (Baker's yeast).